The sequence spans 140 residues: Transmembrane protein 107 (140 aa).

2 consecutive transmembrane segments (helical) span residues 7–27 (LVPS…TLFW) and 53–73 (LVAA…GFLS). The N-linked (GlcNAc...) asparagine glycan is linked to N79. A run of 2 helical transmembrane segments spans residues 83–103 (SLIS…FIFE) and 113–133 (IFVF…VTVF).

In terms of assembly, part of the tectonic-like complex (also named B9 complex). Interacts with TMEM237, TMEM231, MKS1 and TMEM216.

It localises to the membrane. The protein localises to the cell projection. The protein resides in the cilium. Its function is as follows. Plays a role in cilia formation and embryonic patterning. Requires for normal Sonic hedgehog (Shh) signaling in the neural tube and acts in combination with GLI2 and GLI3 to pattern ventral and intermediate neuronal cell types. During ciliogenesis regulates the ciliary transition zone localization of some MKS complex proteins. The chain is Transmembrane protein 107 from Homo sapiens (Human).